Here is a 155-residue protein sequence, read N- to C-terminus: NADPH-dependent 7-cyano-7-deazaguanine reductase (155 aa).

Cys-53 functions as the Thioimide intermediate in the catalytic mechanism. The active-site Proton donor is the Asp-60. Substrate contacts are provided by residues 75 to 77 (VES) and 94 to 95 (HE).

This sequence belongs to the GTP cyclohydrolase I family. QueF type 1 subfamily.

The protein localises to the cytoplasm. The enzyme catalyses 7-aminomethyl-7-carbaguanine + 2 NADP(+) = 7-cyano-7-deazaguanine + 2 NADPH + 3 H(+). Its pathway is tRNA modification; tRNA-queuosine biosynthesis. In terms of biological role, catalyzes the NADPH-dependent reduction of 7-cyano-7-deazaguanine (preQ0) to 7-aminomethyl-7-deazaguanine (preQ1). This is NADPH-dependent 7-cyano-7-deazaguanine reductase from Hyphomonas neptunium (strain ATCC 15444).